Reading from the N-terminus, the 527-residue chain is Palmitoleoyl-protein carboxylesterase NOTUM (527 aa).

Positions 1–19 are cleaved as a signal peptide; it reads MKSYLILNTLLLSLLKING. N-linked (GlcNAc...) asparagine glycans are attached at residues Asn64, Asn86, and Asn104. The Charge relay system role is filled by Ser203. N-linked (GlcNAc...) asparagine glycosylation is present at Asn249. Catalysis depends on charge relay system residues Asp311 and His359. Residue Asn451 is glycosylated (N-linked (GlcNAc...) asparagine).

Belongs to the pectinacetylesterase family. Notum subfamily. As to expression, expressed in the anterior pole.

Its subcellular location is the secreted. The enzyme catalyses [Wnt protein]-O-(9Z)-hexadecenoyl-L-serine + H2O = [Wnt protein]-L-serine + (9Z)-hexadecenoate + H(+). Its function is as follows. Carboxylesterase that acts as a key negative regulator of the Wnt signaling pathway. Acts by specifically mediating depalmitoleoylation of WNT proteins. Serine palmitoleoylation of WNT proteins is required for efficient binding to frizzled receptors. Promotes head regeneration following amputation by inhibiting the Wnt signaling pathway. The sequence is that of Palmitoleoyl-protein carboxylesterase NOTUM from Schmidtea mediterranea (Freshwater planarian flatworm).